The sequence spans 661 residues: Sperm transmembrane protein 9 (661 aa).

Residues 1-16 form the signal peptide; sequence MNVILVLVVLFFAGDC. The Extracellular segment spans residues 17-618; it reads AKIRKIIDFL…MTNRLMKNYE (602 aa). The EGF-like 1 domain occupies 52–90; it reads NFNPCLENPKICSNRGKCLHENGNFYCICPVTHYGKTCE. Disulfide bonds link Cys-56/Cys-69, Cys-63/Cys-78, and Cys-80/Cys-89. N-linked (GlcNAc...) asparagine glycans are attached at residues Asn-105, Asn-106, Asn-134, and Asn-190. Residues 210–259 enclose the EGF-like 2 domain; it reads QISACFDTQCDNGGICEDVVDWKTKTVTATCKCPSAIELIGGTVTGENCE. 3 disulfides stabilise this stretch: Cys-214-Cys-225, Cys-219-Cys-240, and Cys-242-Cys-258. N-linked (GlcNAc...) asparagine glycans are attached at residues Asn-279, Asn-290, Asn-316, and Asn-338. The Cell attachment site signature appears at 377–379; that stretch reads RGD. 3 EGF-like domains span residues 377 to 414, 519 to 557, and 559 to 600; these read RGDR…EKCE, HTNP…SLCE, and VDDS…LDCN. 9 cysteine pairs are disulfide-bonded: Cys-385-Cys-402, Cys-393-Cys-404, Cys-413-Cys-419, Cys-523-Cys-534, Cys-528-Cys-545, Cys-547-Cys-556, Cys-563-Cys-576, Cys-571-Cys-588, and Cys-590-Cys-599. Asn-549 carries an N-linked (GlcNAc...) asparagine glycan. A helical membrane pass occupies residues 619–639; the sequence is FSLPLVACFVSLAILLPVIVI. Residues 640–661 lie on the Cytoplasmic side of the membrane; the sequence is SRRRQGRVEEAKKTSEVKTENP.

Expressed in spermatids, during spermogenesis expression is primarily localized to the pseudopod.

It localises to the cytoplasm. Its subcellular location is the membrane. In terms of biological role, required for fertilization. May be required for cell adhesion and/or function as a signaling molecule. The protein is Sperm transmembrane protein 9 (spe-9) of Caenorhabditis elegans.